The following is a 255-amino-acid chain: Zinc import ATP-binding protein ZnuC 1 (255 aa).

Residues 7–220 (IRLQDVTVKI…PAFINLFGTQ (214 aa)) enclose the ABC transporter domain. 39-46 (GPNGAGKS) is an ATP binding site. The disordered stretch occupies residues 229–255 (HHHHDHHHHTDGTVAAGSECSHGDQHA).

This sequence belongs to the ABC transporter superfamily. Zinc importer (TC 3.A.1.15.5) family. As to quaternary structure, the complex is composed of two ATP-binding proteins (ZnuC), two transmembrane proteins (ZnuB) and a solute-binding protein (ZnuA).

Its subcellular location is the cell inner membrane. The catalysed reaction is Zn(2+)(out) + ATP(in) + H2O(in) = Zn(2+)(in) + ADP(in) + phosphate(in) + H(+)(in). Functionally, part of the ABC transporter complex ZnuABC involved in zinc import. Responsible for energy coupling to the transport system. The polypeptide is Zinc import ATP-binding protein ZnuC 1 (Hahella chejuensis (strain KCTC 2396)).